Here is a 272-residue protein sequence, read N- to C-terminus: MLPTILYSAILALSALTPSALAETRSSGCGKHPSLANGVIHLNGREYILKLPDRYDNNHAYHLVFGLHWRGGNMQNVANGESIQPWYGLETRAQGSTIFIAPNGKNAGWANNGGEDVAFIDAIIKQVEADLCVDQSSRFATGFSWGGGMSYSLACSRAKQFKAVSVLSGGVISGCDGGHDPIAYLGIHGINDGVLPFNGGVGLAQKFVQNNGCQQANIGAPPSGSKSSVRTDFKGCSKPVSFIAYDGGHDSAPLGVGSSLAPDATWKFFMAA.

The first 22 residues, 1–22 (MLPTILYSAILALSALTPSALA), serve as a signal peptide directing secretion.

The protein belongs to the faeC family.

Its subcellular location is the secreted. It carries out the reaction feruloyl-polysaccharide + H2O = ferulate + polysaccharide.. In terms of biological role, involved in degradation of plant cell walls. Hydrolyzes the feruloyl-arabinose ester bond in arabinoxylans, and the feruloyl-galactose ester bond in pectin. Active against paranitrophenyl-acetate, methyl ferulate and wheat arabinoxylan. This is Probable feruloyl esterase C (faeC-1) from Aspergillus clavatus (strain ATCC 1007 / CBS 513.65 / DSM 816 / NCTC 3887 / NRRL 1 / QM 1276 / 107).